The following is a 612-amino-acid chain: MSDKSELKAELERKKQRLAQIREGKKRKEEERKKKETDQKKEAVAPVQEESDLEKKRREAEALLQSMGLTAESPIVPPPMSPSSKSVSTPSEAGSQDSGDGAVGSRRGPIKLGMAKITQVDFPPREIVTYTKETQTPVMAQPKEDEEEEDDVVTPKPPIEPEEEKTLKKDEESDSKAPPHELTEEEKQQILHSEEFLSFFDHSTRIVERALSEQINIFFDYSGRDLEDKEGEIQAGAKLSLNRQFFDERWSKHRVVSCLDWSSQYPELLVASYNNNEDAPHEPDGVALVWNMKYKKTTPEYVFHCQSAVMSATFAKFHPNLVVGGTYSGQIVLWDNRSNKRTPVQRTPLSAAAHTHPVYCVNVVGTQNAHNLISISTDGKICSWSLDMLSHPQDSMELVHKQSKAVAVTSMSFPVGDVNNFVVGSEEGSVYTACRHGSKAGISEMFEGHQGPITGIHCHSAVGAVDFSHLFVTSSFDWTVKLWTTKNNKPLYSFEDNSDYVYDVMWSPTHPALFACVDGMGRLDLWNLNNDTEVPTASISVEGNPALNRVRWTHSGREIAVGDSEGQIVIYDVGEQIAVPRNDEWARFGRTLAEINANRADAEEEAATRIPA.

Composition is skewed to basic and acidic residues over residues 1–13 and 20–43; these read MSDKSELKAELER and QIREGKKRKEEERKKKETDQKKEA. 2 disordered regions span residues 1–117 and 129–188; these read MSDK…MAKI and TYTK…EEKQ. Position 2 is an N-acetylserine (Ser-2). Ser-51 bears the Diphosphoserine mark. Phosphoserine occurs at positions 51 and 84. Positions 82-91 are enriched in low complexity; that stretch reads PSSKSVSTPS. Thr-89 carries the phosphothreonine modification. 3 positions are modified to phosphoserine: Ser-91, Ser-95, and Ser-98. Basic and acidic residues predominate over residues 164–188; the sequence is EKTLKKDEESDSKAPPHELTEEEKQ. WD repeat units lie at residues 251 to 300, 304 to 344, 353 to 394, 403 to 443, 448 to 493, 496 to 536, and 542 to 581; these read SKHR…TTPE, HCQS…RTPV, AHTH…HPQD, SKAV…AGIS, GHQG…PLYS, DNSD…EVPT, and EGNPALNRVRWTHSGREIAVGDSEGQIVIYDVGEQIAVPR.

This sequence belongs to the dynein intermediate chain family. Homodimer. The cytoplasmic dynein 1 complex consists of two catalytic heavy chains (HCs) and a number of non-catalytic subunits presented by intermediate chains (ICs), light intermediate chains (LICs) and light chains (LCs); the composition seems to vary in respect to the IC, LIC and LC composition. The heavy chain homodimer serves as a scaffold for the probable homodimeric assembly of the respective non-catalytic subunits. The ICs and LICs bind directly to the HC dimer and the LCs assemble on the IC dimer. Interacts with DYNLT3. Interacts with DYNLT1. Interacts (dephosphorylated at Ser-84) with DCTN1. Interacts with BICD2. Interacts with SPEF2. Interacts with CFAP61. In terms of processing, the phosphorylation status of Ser-84 appears to be involved in dynactin-dependent target binding. Pyrophosphorylation by 5-diphosphoinositol pentakisphosphate (5-IP7) promotes interaction with DCTN1. Serine pyrophosphorylation is achieved by Mg(2+)-dependent, but enzyme independent transfer of a beta-phosphate from a inositol pyrophosphate to a pre-phosphorylated serine residue.

The protein resides in the cytoplasm. It localises to the cytoskeleton. Its function is as follows. Acts as one of several non-catalytic accessory components of the cytoplasmic dynein 1 complex that are thought to be involved in linking dynein to cargos and to adapter proteins that regulate dynein function. Cytoplasmic dynein 1 acts as a motor for the intracellular retrograde motility of vesicles and organelles along microtubules. The intermediate chains mediate the binding of dynein to dynactin via its 150 kDa component (p150-glued) DCTN1. Involved in membrane-transport, such as Golgi apparatus, late endosomes and lysosomes. The sequence is that of Cytoplasmic dynein 1 intermediate chain 2 (DYNC1I2) from Bos taurus (Bovine).